We begin with the raw amino-acid sequence, 83 residues long: RNA-binding protein Hfq (83 aa).

In terms of domain architecture, Sm spans 9 to 69; the sequence is DQLLNTARKE…ISTIIPAKPI (61 aa).

The protein belongs to the Hfq family. Homohexamer.

Functionally, RNA chaperone that binds small regulatory RNA (sRNAs) and mRNAs to facilitate mRNA translational regulation in response to envelope stress, environmental stress and changes in metabolite concentrations. Also binds with high specificity to tRNAs. The sequence is that of RNA-binding protein Hfq from Leptospira biflexa serovar Patoc (strain Patoc 1 / Ames).